The chain runs to 509 residues: MVRTAVLILLLVRFSEPAEHCNAQMNSGPWRIKNLSIAPPKETLQKDVEIEIVETNMDENVIIGYKGYYQAYAYNGGSLDPNTRIEETMETLNVAKEDLLMWSIRRQCEVGEELIDQWGSDSDNCFRNKDGRGVWVFGKELVKRQNNNHFARHTCNRSWRCGVSTAKMYTRLECDNDNDECKVTILDINGASINVTENTVLHRDGVSMVLKQKSTFSRRPEKVACLLIKDDKSDPRSVTREHCLVDNDIFDLSKNTWLCKFNRCIKRKSENVVKQRPPTWRHDVSAKHDEGASATKGDLMHIQEELMYENDLLRMNLELMHAHINKLNNMLHNLIVSVAKVDERLIGNLMNNSVSSTFLSDDTFLLMPCTHPPPHTSNCYNNSIYKEGRWVANTDSSQCIDFNNYKELAIDDDIEFWIPTIGNTTYHENWKDASGWSFIAQQKSNLISTMENTKFGGHTTSLSDITDMAKGELNAKLWSFMLGHAFSFMLTVGVIIFLFCMVRNRSRAY.

The signal sequence occupies residues 1-17; the sequence is MVRTAVLILLLVRFSEP. N-linked (GlcNAc...) asparagine; by host glycans are attached at residues asparagine 34, asparagine 156, asparagine 194, asparagine 351, asparagine 381, and asparagine 423. The O-palmitoyl serine; by host moiety is linked to residue serine 479. Residues 480-502 form a helical membrane-spanning segment; it reads FMLGHAFSFMLTVGVIIFLFCMV. The N-linked (GlcNAc...) asparagine; by host glycan is linked to asparagine 504.

This sequence belongs to the baculoviridae gp64 family. In terms of processing, palmitoylated.

Its subcellular location is the virion membrane. It localises to the host cell membrane. In terms of biological role, envelope phosphoglycoprotein which mediates the fusion of viral and host endosomal membranes leading to virus entry into the host cell. The protein is Major envelope glycoprotein (GP67) of Choristoneura fumiferana nuclear polyhedrosis virus (CfMNPV).